Reading from the N-terminus, the 310-residue chain is Homoserine kinase (310 aa).

Position 91 to 101 (Pro91 to Cys101) interacts with ATP.

Belongs to the GHMP kinase family. Homoserine kinase subfamily.

It is found in the cytoplasm. It carries out the reaction L-homoserine + ATP = O-phospho-L-homoserine + ADP + H(+). It functions in the pathway amino-acid biosynthesis; L-threonine biosynthesis; L-threonine from L-aspartate: step 4/5. Functionally, catalyzes the ATP-dependent phosphorylation of L-homoserine to L-homoserine phosphate. In Escherichia coli (strain K12 / MC4100 / BW2952), this protein is Homoserine kinase.